We begin with the raw amino-acid sequence, 431 residues long: Ribonuclease TTHA0252 (431 aa).

H59, H61, D63, H64, H141, D162, and H400 together coordinate Zn(2+).

This sequence belongs to the metallo-beta-lactamase superfamily. RNA-metabolizing metallo-beta-lactamase-like family. In terms of assembly, monomer. Requires Zn(2+) as cofactor.

The protein resides in the cytoplasm. Its activity is regulated as follows. Inhibited by cadmium, cobalt, manganese, magnesium, calcium and nickel ions. Its function is as follows. Has endoribonuclease activity towards 23S and 16S rRNA (in vitro). This is Ribonuclease TTHA0252 from Thermus thermophilus (strain ATCC 27634 / DSM 579 / HB8).